A 481-amino-acid polypeptide reads, in one-letter code: Probable autolysin LytO (481 aa).

The region spanning 7-148 is the Peptidase C51 domain; it reads KNEFIEWLKT…AYDFPMWFIR (142 aa). A compositionally biased stretch (polar residues) spans 155–165; the sequence is TAPRSVQSPTQ. A disordered region spans residues 155–177; it reads TAPRSVQSPTQAPKKETAKPQPK. The N-acetylmuramoyl-L-alanine amidase domain maps to 198-323; it reads SNPKGIVIHN…NEFTSTSCPH (126 aa). Residues 398–466 enclose the SH3b domain; sequence EESARFTNGN…YLPIRTWNGS (69 aa).

This sequence belongs to the N-acetylmuramoyl-L-alanine amidase 2 family.

It carries out the reaction Hydrolyzes the link between N-acetylmuramoyl residues and L-amino acid residues in certain cell-wall glycopeptides.. In terms of biological role, has weak lytic activity toward S.aureus cells. In Staphylococcus aureus (strain NCTC 8325 / PS 47), this protein is Probable autolysin LytO.